We begin with the raw amino-acid sequence, 594 residues long: Elongation factor 4 (594 aa).

A tr-type G domain is found at 2–184; that stretch reads KNIRNFSIIA…TIVAKVPAPE (183 aa). GTP-binding positions include 14-19 and 131-134; these read DHGKST and NKID.

It belongs to the TRAFAC class translation factor GTPase superfamily. Classic translation factor GTPase family. LepA subfamily.

Its subcellular location is the cell inner membrane. The catalysed reaction is GTP + H2O = GDP + phosphate + H(+). Functionally, required for accurate and efficient protein synthesis under certain stress conditions. May act as a fidelity factor of the translation reaction, by catalyzing a one-codon backward translocation of tRNAs on improperly translocated ribosomes. Back-translocation proceeds from a post-translocation (POST) complex to a pre-translocation (PRE) complex, thus giving elongation factor G a second chance to translocate the tRNAs correctly. Binds to ribosomes in a GTP-dependent manner. This is Elongation factor 4 from Francisella tularensis subsp. novicida (strain U112).